We begin with the raw amino-acid sequence, 460 residues long: NADH-ubiquinone oxidoreductase chain 4 (460 aa).

12 helical membrane-spanning segments follow: residues 20-42 (PKWL…LTWL), 61-81 (PLST…VLAS), 93-113 (QRLY…AFGA), 114-134 (TEII…LIII), 148-168 (TYFL…LLLL), 195-215 (IWWA…GVHL), 225-245 (PVAG…YGMM), 258-278 (LAYP…SICL), 285-304 (SLIA…GILI), 309-331 (GFTG…FCLA), 351-371 (MIFP…LALP), and 394-414 (IILT…LFLM).

It belongs to the complex I subunit 4 family.

It localises to the mitochondrion membrane. The enzyme catalyses a ubiquinone + NADH + 5 H(+)(in) = a ubiquinol + NAD(+) + 4 H(+)(out). In terms of biological role, core subunit of the mitochondrial membrane respiratory chain NADH dehydrogenase (Complex I) that is believed to belong to the minimal assembly required for catalysis. Complex I functions in the transfer of electrons from NADH to the respiratory chain. The immediate electron acceptor for the enzyme is believed to be ubiquinone. In Formosania lacustris (Oriental stream loach), this protein is NADH-ubiquinone oxidoreductase chain 4 (MT-ND4).